A 419-amino-acid chain; its full sequence is UDP-N-acetylglucosamine 1-carboxyvinyltransferase 2 (419 aa).

Residue Lys24–Asn25 participates in phosphoenolpyruvate binding. Residue Arg94 participates in UDP-N-acetyl-alpha-D-glucosamine binding. Cys118 acts as the Proton donor in catalysis. Position 118 is a 2-(S-cysteinyl)pyruvic acid O-phosphothioketal (Cys118). Residues Arg123–Gln127, Asp307, and Ile329 contribute to the UDP-N-acetyl-alpha-D-glucosamine site.

This sequence belongs to the EPSP synthase family. MurA subfamily.

It is found in the cytoplasm. The catalysed reaction is phosphoenolpyruvate + UDP-N-acetyl-alpha-D-glucosamine = UDP-N-acetyl-3-O-(1-carboxyvinyl)-alpha-D-glucosamine + phosphate. The protein operates within cell wall biogenesis; peptidoglycan biosynthesis. In terms of biological role, cell wall formation. Adds enolpyruvyl to UDP-N-acetylglucosamine. This chain is UDP-N-acetylglucosamine 1-carboxyvinyltransferase 2, found in Staphylococcus epidermidis (strain ATCC 12228 / FDA PCI 1200).